Here is a 929-residue protein sequence, read N- to C-terminus: Isoleucine--tRNA ligase (929 aa).

The 'HIGH' region motif lies at 58 to 68 (PYANGDIHIGH). L-isoleucyl-5'-AMP is bound at residue Glu-563. The 'KMSKS' region signature appears at 605–609 (KMSKS). Residue Lys-608 participates in ATP binding. Zn(2+) is bound by residues Cys-892, Cys-895, Cys-912, and Cys-915.

Belongs to the class-I aminoacyl-tRNA synthetase family. IleS type 1 subfamily. Monomer. Zn(2+) is required as a cofactor.

It is found in the cytoplasm. The catalysed reaction is tRNA(Ile) + L-isoleucine + ATP = L-isoleucyl-tRNA(Ile) + AMP + diphosphate. Catalyzes the attachment of isoleucine to tRNA(Ile). As IleRS can inadvertently accommodate and process structurally similar amino acids such as valine, to avoid such errors it has two additional distinct tRNA(Ile)-dependent editing activities. One activity is designated as 'pretransfer' editing and involves the hydrolysis of activated Val-AMP. The other activity is designated 'posttransfer' editing and involves deacylation of mischarged Val-tRNA(Ile). The protein is Isoleucine--tRNA ligase of Neisseria gonorrhoeae (strain NCCP11945).